A 232-amino-acid polypeptide reads, in one-letter code: 7-cyano-7-deazaguanine synthase (232 aa).

8-18 provides a ligand contact to ATP; that stretch reads LSGGLDSATVL. Positions 188, 198, 201, and 204 each coordinate Zn(2+).

The protein belongs to the QueC family. Zn(2+) is required as a cofactor.

The enzyme catalyses 7-carboxy-7-deazaguanine + NH4(+) + ATP = 7-cyano-7-deazaguanine + ADP + phosphate + H2O + H(+). It participates in purine metabolism; 7-cyano-7-deazaguanine biosynthesis. Functionally, catalyzes the ATP-dependent conversion of 7-carboxy-7-deazaguanine (CDG) to 7-cyano-7-deazaguanine (preQ(0)). The sequence is that of 7-cyano-7-deazaguanine synthase from Nitrosospira multiformis (strain ATCC 25196 / NCIMB 11849 / C 71).